A 211-amino-acid polypeptide reads, in one-letter code: Large ribosomal subunit protein mL48 (211 aa).

The N-terminal 27 residues, 1 to 27, are a transit peptide targeting the mitochondrion; the sequence is MSGTLGKVLGVWTNTVSKQGFSLLRFR. The residue at position 198 (Lys198) is an N6-succinyllysine.

This sequence belongs to the mitochondrion-specific ribosomal protein mL48 family. Component of the mitochondrial ribosome large subunit (39S) which comprises a 16S rRNA and about 50 distinct proteins. Interacts with OXA1L.

It localises to the mitochondrion. In Mus musculus (Mouse), this protein is Large ribosomal subunit protein mL48 (Mrpl48).